The chain runs to 387 residues: Zinc homeostasis factor 1 (387 aa).

The next 4 helical transmembrane spans lie at 10–30 (IILL…TGYA), 34–54 (LALI…LVAL), 77–97 (EILG…FIFM), and 113–133 (TLMF…IFLF). Positions 195–214 (SYTGNHNGAGTSKPVNNHGS) are enriched in polar residues. The tract at residues 195-221 (SYTGNHNGAGTSKPVNNHGSIEQDAPK) is disordered. Transmembrane regions (helical) follow at residues 234–254 (FLHV…ALFI) and 263–283 (FLFD…SAIP).

This sequence belongs to the cation diffusion facilitator (CDF) transporter (TC 2.A.4) family. SLC30A subfamily.

Its subcellular location is the endoplasmic reticulum membrane. It is found in the nucleus membrane. In terms of biological role, involved in zinc homeostasis, where it plays a role in its accumulation in the endoplasmic reticulum/nucleus. Also has a role in the sequestration of cadmium into the endoplasmic reticulum. This Schizosaccharomyces pombe (strain 972 / ATCC 24843) (Fission yeast) protein is Zinc homeostasis factor 1 (zhf1).